A 266-amino-acid polypeptide reads, in one-letter code: GTP cyclohydrolase III (266 aa).

It belongs to the archaeal-type GTP cyclohydrolase family.

It carries out the reaction GTP + 3 H2O = 2-amino-5-formylamino-6-(5-phospho-D-ribosylamino)pyrimidin-4(3H)-one + 2 phosphate + 2 H(+). Catalyzes the formation of 2-amino-5-formylamino-6-ribofuranosylamino-4(3H)-pyrimidinone ribonucleotide monophosphate and inorganic phosphate from GTP. Also has an independent pyrophosphate phosphohydrolase activity. This chain is GTP cyclohydrolase III, found in Methanococcus maripaludis (strain DSM 14266 / JCM 13030 / NBRC 101832 / S2 / LL).